The chain runs to 49 residues: Sperm protamine P1 (49 aa).

A disordered region spans residues 1–49 (MARYRCCRSHSRSRCRRRRRRSRRRRRRSCGRRRRAGYRRYTVRYRRRR).

It belongs to the protamine P1 family. As to expression, testis.

It localises to the nucleus. Its subcellular location is the chromosome. Its function is as follows. Protamines substitute for histones in the chromatin of sperm during the haploid phase of spermatogenesis. They compact sperm DNA into a highly condensed, stable and inactive complex. In Macronycteris commersonii (Commerson's roundleaf bat), this protein is Sperm protamine P1 (PRM1).